The following is a 126-amino-acid chain: Aspartate 1-decarboxylase (126 aa).

S25 functions as the Schiff-base intermediate with substrate; via pyruvic acid in the catalytic mechanism. At S25 the chain carries Pyruvic acid (Ser). T57 provides a ligand contact to substrate. Residue Y58 is the Proton donor of the active site. 73–75 (GAA) is a substrate binding site.

This sequence belongs to the PanD family. In terms of assembly, heterooctamer of four alpha and four beta subunits. Requires pyruvate as cofactor. In terms of processing, is synthesized initially as an inactive proenzyme, which is activated by self-cleavage at a specific serine bond to produce a beta-subunit with a hydroxyl group at its C-terminus and an alpha-subunit with a pyruvoyl group at its N-terminus.

The protein localises to the cytoplasm. It catalyses the reaction L-aspartate + H(+) = beta-alanine + CO2. Its pathway is cofactor biosynthesis; (R)-pantothenate biosynthesis; beta-alanine from L-aspartate: step 1/1. Its function is as follows. Catalyzes the pyruvoyl-dependent decarboxylation of aspartate to produce beta-alanine. This Psychrobacter arcticus (strain DSM 17307 / VKM B-2377 / 273-4) protein is Aspartate 1-decarboxylase.